The following is a 404-amino-acid chain: MGVQRLALALIAFTSALTSVIAAPIVIEQPPLGPEHRYDAIVIGGGPSGLSALSSLGRVRRHVLLFDEGIYRNGATRHIHDMLTNDGVEPKVFRAKARQQISRYTSTSIKDVKVTKIKKVFEHGGRKYFFQVTDKTGAMYTASKVVLGTGVLDVLPGTPGLQENFGKGIYWCPWCDGWEHRDQPLGILGPLRHVMDSVYELETLNNDIIAFVNGTEHSVEDILYLNRKYPHWRQQLKHYNVQINNKMVSSIDRLQDGSKHQDKKTWQEFDKFRVNFNDGTSVERSVFITNFPTEQHSDLPDQLGLARDPIHKNKIKVNFKGMRASVPGVFVVGDANNDGSTNGNHAMFSGKRAAVALHVELEQERAEAALGKRDESFSAEQVENEALKLIGRDTEELEELWGRK.

The N-terminal stretch at 1-22 (MGVQRLALALIAFTSALTSVIA) is a signal peptide. 67–75 (DEGIYRNGA) contributes to the FAD binding site. A disulfide bridge links Cys-172 with Cys-175. Asn-213 carries N-linked (GlcNAc...) asparagine glycosylation. 334–343 (DANNDGSTNG) provides a ligand contact to FAD.

The protein belongs to the class-II pyridine nucleotide-disulfide oxidoreductase family. Homodimer. The cofactor is FAD.

It is found in the secreted. It catalyses the reaction [thioredoxin]-dithiol + NADP(+) = [thioredoxin]-disulfide + NADPH + H(+). The sequence is that of Probable thioredoxin reductase ARB_06224 from Arthroderma benhamiae (strain ATCC MYA-4681 / CBS 112371) (Trichophyton mentagrophytes).